Here is a 320-residue protein sequence, read N- to C-terminus: Metapyrocatechase 2 (320 aa).

Disordered stretches follow at residues 1–21 and 131–153; these read MDTHRADASQRSQAPAARPRH and GPKTSPSSKSPARLEGAPGGQRG. 2 consecutive VOC domains span residues 25–131 and 167–282; these read SIDH…VKIG and RLSH…YSAD. 3 residues coordinate Fe cation: His170, His227, and Glu278.

The protein belongs to the extradiol ring-cleavage dioxygenase family. Fe(2+) serves as cofactor.

The catalysed reaction is catechol + O2 = (2Z,4E)-2-hydroxy-6-oxohexa-2,4-dienoate + H(+). The polypeptide is Metapyrocatechase 2 (mcpII) (Cupriavidus necator (Alcaligenes eutrophus)).